Here is a 222-residue protein sequence, read N- to C-terminus: Ribosomal RNA large subunit methyltransferase E (222 aa).

S-adenosyl-L-methionine-binding residues include Gly64, Trp66, Asp92, Asp108, and Asp133. Lys173 acts as the Proton acceptor in catalysis.

This sequence belongs to the class I-like SAM-binding methyltransferase superfamily. RNA methyltransferase RlmE family.

It localises to the cytoplasm. The enzyme catalyses uridine(2552) in 23S rRNA + S-adenosyl-L-methionine = 2'-O-methyluridine(2552) in 23S rRNA + S-adenosyl-L-homocysteine + H(+). Its function is as follows. Specifically methylates the uridine in position 2552 of 23S rRNA at the 2'-O position of the ribose in the fully assembled 50S ribosomal subunit. The protein is Ribosomal RNA large subunit methyltransferase E of Variovorax paradoxus (strain S110).